Reading from the N-terminus, the 330-residue chain is uncharacterized protein (330 aa).

The JmjC domain occupies 96–256 (AALEFDFTDL…LMLAALRKKL (161 aa)). Residues H145, D147, and H224 each coordinate Fe cation.

This sequence belongs to the ROX family. Fe(2+) is required as a cofactor.

This is an uncharacterized protein from Bacillus subtilis (strain 168).